The following is a 199-amino-acid chain: Holliday junction branch migration complex subunit RuvA (199 aa).

The segment at 1-65 is domain I; the sequence is MIGWLHGQII…EDALLLYGFL (65 aa). The segment at 66 to 144 is domain II; it reads DKEERSLFRS…QFDGSVSDTF (79 aa). The interval 144–148 is flexible linker; sequence FQKQA. Residues 149-199 are domain III; that stretch reads GSTHSQQEAISALEALGYKPQEAWKVVNKIDNGNKSCEQLIREALQILSSR.

Belongs to the RuvA family. In terms of assembly, homotetramer. Forms an RuvA(8)-RuvB(12)-Holliday junction (HJ) complex. HJ DNA is sandwiched between 2 RuvA tetramers; dsDNA enters through RuvA and exits via RuvB. An RuvB hexamer assembles on each DNA strand where it exits the tetramer. Each RuvB hexamer is contacted by two RuvA subunits (via domain III) on 2 adjacent RuvB subunits; this complex drives branch migration. In the full resolvosome a probable DNA-RuvA(4)-RuvB(12)-RuvC(2) complex forms which resolves the HJ.

The protein resides in the cytoplasm. In terms of biological role, the RuvA-RuvB-RuvC complex processes Holliday junction (HJ) DNA during genetic recombination and DNA repair, while the RuvA-RuvB complex plays an important role in the rescue of blocked DNA replication forks via replication fork reversal (RFR). RuvA specifically binds to HJ cruciform DNA, conferring on it an open structure. The RuvB hexamer acts as an ATP-dependent pump, pulling dsDNA into and through the RuvAB complex. HJ branch migration allows RuvC to scan DNA until it finds its consensus sequence, where it cleaves and resolves the cruciform DNA. In Legionella pneumophila (strain Paris), this protein is Holliday junction branch migration complex subunit RuvA.